The following is a 277-amino-acid chain: S-formylglutathione hydrolase FrmB (277 aa).

Active-site charge relay system residues include serine 145, aspartate 221, and histidine 254.

It belongs to the esterase D family.

It carries out the reaction S-formylglutathione + H2O = formate + glutathione + H(+). In terms of biological role, serine hydrolase involved in the detoxification of formaldehyde. Hydrolyzes S-formylglutathione to glutathione and formate. The polypeptide is S-formylglutathione hydrolase FrmB (frmB) (Escherichia coli O6:K15:H31 (strain 536 / UPEC)).